The sequence spans 198 residues: Nucleoid occlusion factor SlmA (198 aa).

Positions 9 to 70 constitute an HTH tetR-type domain; that stretch reads RNRREEILQA…SLIEFIEDTL (62 aa). The segment at residues 33-52 is a DNA-binding region (H-T-H motif); that stretch reads TTAKLAANVGVSEAALYRHF. The stretch at 117–144 forms a coiled coil; sequence EQDRLQGRINQLFERIEAQLRQVLKERR.

The protein belongs to the nucleoid occlusion factor SlmA family. In terms of assembly, homodimer. Interacts with FtsZ.

The protein localises to the cytoplasm. Its subcellular location is the nucleoid. Its function is as follows. Required for nucleoid occlusion (NO) phenomenon, which prevents Z-ring formation and cell division over the nucleoid. Acts as a DNA-associated cell division inhibitor that binds simultaneously chromosomal DNA and FtsZ, and disrupts the assembly of FtsZ polymers. SlmA-DNA-binding sequences (SBS) are dispersed on non-Ter regions of the chromosome, preventing FtsZ polymerization at these regions. This Edwardsiella ictaluri (strain 93-146) protein is Nucleoid occlusion factor SlmA.